A 362-amino-acid polypeptide reads, in one-letter code: 3-dehydroquinate synthase (362 aa).

NAD(+) is bound by residues Asp71–Lys76, Gly105–Asp109, Thr129–Thr130, Lys142, Lys151, and Cys169–Thr172. Positions 184, 247, and 264 each coordinate Zn(2+).

It belongs to the sugar phosphate cyclases superfamily. Dehydroquinate synthase family. The cofactor is Co(2+). Zn(2+) serves as cofactor. NAD(+) is required as a cofactor.

The protein localises to the cytoplasm. The enzyme catalyses 7-phospho-2-dehydro-3-deoxy-D-arabino-heptonate = 3-dehydroquinate + phosphate. It functions in the pathway metabolic intermediate biosynthesis; chorismate biosynthesis; chorismate from D-erythrose 4-phosphate and phosphoenolpyruvate: step 2/7. In terms of biological role, catalyzes the conversion of 3-deoxy-D-arabino-heptulosonate 7-phosphate (DAHP) to dehydroquinate (DHQ). This is 3-dehydroquinate synthase from Salmonella agona (strain SL483).